The following is a 400-amino-acid chain: Phosphoglycerate kinase (400 aa).

Residues 20–22, Arg-35, 58–61, Arg-115, and Arg-155 contribute to the substrate site; these read DLN and HQGR. ATP is bound by residues Glu-330 and 356–359; that span reads GGDT.

Belongs to the phosphoglycerate kinase family. Monomer.

It localises to the cytoplasm. It catalyses the reaction (2R)-3-phosphoglycerate + ATP = (2R)-3-phospho-glyceroyl phosphate + ADP. Its pathway is carbohydrate degradation; glycolysis; pyruvate from D-glyceraldehyde 3-phosphate: step 2/5. The chain is Phosphoglycerate kinase from Haloarcula marismortui (strain ATCC 43049 / DSM 3752 / JCM 8966 / VKM B-1809) (Halobacterium marismortui).